Here is a 161-residue protein sequence, read N- to C-terminus: Phosphopantetheine adenylyltransferase (161 aa).

Residue Thr-10 participates in substrate binding. ATP contacts are provided by residues 10–11 and His-18; that span reads TF. Residues Lys-42, Leu-75, and Arg-89 each contribute to the substrate site. ATP is bound by residues 90–92, Glu-100, and 125–131; these read GLR and YSFLSSS.

This sequence belongs to the bacterial CoaD family. As to quaternary structure, homohexamer. Mg(2+) is required as a cofactor.

It is found in the cytoplasm. The catalysed reaction is (R)-4'-phosphopantetheine + ATP + H(+) = 3'-dephospho-CoA + diphosphate. Its pathway is cofactor biosynthesis; coenzyme A biosynthesis; CoA from (R)-pantothenate: step 4/5. In terms of biological role, reversibly transfers an adenylyl group from ATP to 4'-phosphopantetheine, yielding dephospho-CoA (dPCoA) and pyrophosphate. This is Phosphopantetheine adenylyltransferase from Thermodesulfovibrio yellowstonii (strain ATCC 51303 / DSM 11347 / YP87).